Consider the following 284-residue polypeptide: 2-dehydro-3-deoxyphosphooctonate aldolase (284 aa).

It belongs to the KdsA family.

It localises to the cytoplasm. It catalyses the reaction D-arabinose 5-phosphate + phosphoenolpyruvate + H2O = 3-deoxy-alpha-D-manno-2-octulosonate-8-phosphate + phosphate. The protein operates within carbohydrate biosynthesis; 3-deoxy-D-manno-octulosonate biosynthesis; 3-deoxy-D-manno-octulosonate from D-ribulose 5-phosphate: step 2/3. Its pathway is bacterial outer membrane biogenesis; lipopolysaccharide biosynthesis. This Enterobacter sp. (strain 638) protein is 2-dehydro-3-deoxyphosphooctonate aldolase.